The primary structure comprises 210 residues: Cyclin-U1-1 (210 aa).

The protein belongs to the cyclin family. Cyclin U/P subfamily. In terms of assembly, interacts with CDKA-1. In terms of tissue distribution, expressed in roots and flowers. Expressed in the shoot apex, leaf primordia and young leaves.

This is Cyclin-U1-1 (CYCU1-1) from Arabidopsis thaliana (Mouse-ear cress).